Here is a 641-residue protein sequence, read N- to C-terminus: 1-deoxy-D-xylulose-5-phosphate synthase (641 aa).

Residues His79 and 120 to 122 (GHS) contribute to the thiamine diphosphate site. Asp151 is a binding site for Mg(2+). Thiamine diphosphate is bound by residues 152–153 (GS), Asn180, Tyr291, and Glu375. Asn180 is a Mg(2+) binding site.

It belongs to the transketolase family. DXPS subfamily. As to quaternary structure, homodimer. Mg(2+) is required as a cofactor. It depends on thiamine diphosphate as a cofactor.

It catalyses the reaction D-glyceraldehyde 3-phosphate + pyruvate + H(+) = 1-deoxy-D-xylulose 5-phosphate + CO2. Its pathway is metabolic intermediate biosynthesis; 1-deoxy-D-xylulose 5-phosphate biosynthesis; 1-deoxy-D-xylulose 5-phosphate from D-glyceraldehyde 3-phosphate and pyruvate: step 1/1. Catalyzes the acyloin condensation reaction between C atoms 2 and 3 of pyruvate and glyceraldehyde 3-phosphate to yield 1-deoxy-D-xylulose-5-phosphate (DXP). The chain is 1-deoxy-D-xylulose-5-phosphate synthase from Nitratidesulfovibrio vulgaris (strain ATCC 29579 / DSM 644 / CCUG 34227 / NCIMB 8303 / VKM B-1760 / Hildenborough) (Desulfovibrio vulgaris).